We begin with the raw amino-acid sequence, 524 residues long: Chromosomal replication initiator protein DnaA (524 aa).

The tract at residues 1–105 is domain I, interacts with DnaA modulators; the sequence is MSQNSSSLLE…EQEIPETPAQ (105 aa). The disordered stretch occupies residues 95–183; the sequence is PEQEIPETPA…PAHNPNREVS (89 aa). The interval 106–182 is domain II; it reads QEFKYQPDAP…TPAHNPNREV (77 aa). Over residues 148 to 158 the composition is skewed to pro residues; it reads APEPHPAPIAD. A domain III, AAA+ region region spans residues 183 to 399; it reads SLNPKYTFES…GALIRVSAYS (217 aa). The ATP site is built by Gly-227, Gly-229, Lys-230, and Thr-231. The interval 400–524 is domain IV, binds dsDNA; sequence SLINQPIDKE…TQLIKSRGRN (125 aa).

The protein belongs to the DnaA family. In terms of assembly, oligomerizes as a right-handed, spiral filament on DNA at oriC.

The protein localises to the cytoplasm. Its function is as follows. Plays an essential role in the initiation and regulation of chromosomal replication. ATP-DnaA binds to the origin of replication (oriC) to initiate formation of the DNA replication initiation complex once per cell cycle. Binds the DnaA box (a 9 base pair repeat at the origin) and separates the double-stranded (ds)DNA. Forms a right-handed helical filament on oriC DNA; dsDNA binds to the exterior of the filament while single-stranded (ss)DNA is stabiized in the filament's interior. The ATP-DnaA-oriC complex binds and stabilizes one strand of the AT-rich DNA unwinding element (DUE), permitting loading of DNA polymerase. After initiation quickly degrades to an ADP-DnaA complex that is not apt for DNA replication. Binds acidic phospholipids. This Corynebacterium glutamicum (strain R) protein is Chromosomal replication initiator protein DnaA.